We begin with the raw amino-acid sequence, 222 residues long: Glutathione S-transferase alpha M14 (222 aa).

Position 1 is an N-acetylmethionine (methionine 1). Alanine 2 is modified (N-acetylalanine; in Glutathione S-transferase alpha M14, N-terminally processed). The GST N-terminal domain maps to 3-83 (GKPILHYFNG…YIATKYNLYG (81 aa)). Lysine 4 carries the post-translational modification N6-succinyllysine. Residues tyrosine 9, 54–55 (QV), and 67–68 (QT) each bind glutathione. Residues 85 to 208 (DAKERALIDM…QPGSQRKPPM (124 aa)) form the GST C-terminal domain. The disordered stretch occupies residues 199 to 222 (QPGSQRKPPMDAKKIRRSQEYFPD). A compositionally biased stretch (basic and acidic residues) spans 206 to 222 (PPMDAKKIRRSQEYFPD).

This sequence belongs to the GST superfamily. Alpha family. In terms of assembly, homodimer or heterodimer of GSTA1 and GSTA2.

The protein resides in the cytoplasm. The catalysed reaction is RX + glutathione = an S-substituted glutathione + a halide anion + H(+). It carries out the reaction prostaglandin A2 + glutathione = prostaglandin A2-S-(R)-glutathione. It catalyses the reaction prostaglandin J2 + glutathione = prostaglandin J2-S-(R)-glutathione. The enzyme catalyses (13S)-hydroperoxy-(9Z,11E)-octadecadienoate + 2 glutathione = (13S)-hydroxy-(9Z,11E)-octadecadienoate + glutathione disulfide + H2O. The catalysed reaction is androst-5-ene-3,17-dione = androst-4-ene-3,17-dione. Functionally, glutathione S-transferase that catalyzes the nucleophilic attack of the sulfur atom of glutathione on the electrophilic groups of a wide range of exogenous and endogenous compounds. Involved in the formation of glutathione conjugates of both prostaglandin A2 (PGA2) and prostaglandin J2 (PGJ2). It also catalyzes the isomerization of D5-androstene-3,17-dione (AD) into D4-androstene-3,17-dione and may therefore play an important role in hormone biosynthesis. Through its glutathione-dependent peroxidase activity toward the fatty acid hydroperoxide (13S)-hydroperoxy-(9Z,11E)-octadecadienoate/13-HPODE it is also involved in the metabolism of oxidized linoleic acid. In Sus scrofa (Pig), this protein is Glutathione S-transferase alpha M14.